Here is a 280-residue protein sequence, read N- to C-terminus: UPF0273 protein SSO1861 (280 aa).

A KaiC domain is found at 2–246 (KRVKTYIPGL…YLKISNWSVS (245 aa)). Residue 29-36 (GGPGTGKS) participates in ATP binding.

This sequence belongs to the UPF0273 family.

The polypeptide is UPF0273 protein SSO1861 (Saccharolobus solfataricus (strain ATCC 35092 / DSM 1617 / JCM 11322 / P2) (Sulfolobus solfataricus)).